A 522-amino-acid chain; its full sequence is Ribonuclease Y (522 aa).

The helical transmembrane segment at W2–L22 threads the bilayer. The KH domain occupies L212–D278. The HD domain occupies A338 to A431.

Belongs to the RNase Y family.

Its subcellular location is the cell membrane. Functionally, endoribonuclease that initiates mRNA decay. This is Ribonuclease Y from Nitratiruptor sp. (strain SB155-2).